Here is a 446-residue protein sequence, read N- to C-terminus: N-succinylarginine dihydrolase (446 aa).

Substrate contacts are provided by residues 19 to 28 (AGLSFGNVAS), Asn110, and 137 to 138 (HR). Glu174 is a catalytic residue. Arg213 contributes to the substrate binding site. His249 is an active-site residue. Residues Asp251 and Asn364 each contribute to the substrate site. Cys370 acts as the Nucleophile in catalysis.

This sequence belongs to the succinylarginine dihydrolase family. As to quaternary structure, homodimer.

It catalyses the reaction N(2)-succinyl-L-arginine + 2 H2O + 2 H(+) = N(2)-succinyl-L-ornithine + 2 NH4(+) + CO2. The protein operates within amino-acid degradation; L-arginine degradation via AST pathway; L-glutamate and succinate from L-arginine: step 2/5. Functionally, catalyzes the hydrolysis of N(2)-succinylarginine into N(2)-succinylornithine, ammonia and CO(2). This chain is N-succinylarginine dihydrolase, found in Burkholderia cenocepacia (strain HI2424).